Consider the following 130-residue polypeptide: Small ribosomal subunit protein uS9 (130 aa).

It belongs to the universal ribosomal protein uS9 family.

The protein is Small ribosomal subunit protein uS9 of Shewanella baltica (strain OS155 / ATCC BAA-1091).